Reading from the N-terminus, the 283-residue chain is Lectin subunit alpha (283 aa).

Positions 1–23 are cleaved as a signal peptide; it reads MSLTMKNVEGFVIFLVIFTSTAA. Residues 51-159 enclose the C-type lectin domain; it reads HECARHDQQL…NVKMGYICEP (109 aa). Cystine bridges form between cysteine 53/cysteine 157 and cysteine 132/cysteine 149.

Functionally, role in the defense system of the organism against microorganisms. This lectin binds galactose. The polypeptide is Lectin subunit alpha (Sarcophaga peregrina (Flesh fly)).